We begin with the raw amino-acid sequence, 473 residues long: MAQHDFAPAWLNFPTPPSSTKSSLNFEKHSENFAWTENRYDVNRRRHNSSDGFDSAIGRPNGGNFGRKEKNGWRTHGRNGTENINHRGGYHGGSSRSRSSIFHSGKSQGLHENNIPDNETGRKEDKRERKQFEAEDFPSLNPEYEREPNHNKSLAAGVWEYPPNPKSRAPRMLVIKKGNTKDLQLSGFPVVGNLPSQPVKNGTGPSVYKGLVPKPAAPPTKPTQWKSQTKENKVGTSFPHESTFGVGNFNAFKSTAKNFSPSTNSVKECNRSNSSSPVDKLNQQPRLTKLTRMRTDKKSEFLKALKRDRVEEEHEDESRAGSEKDDDSFNLHNSNSTHQERDINRNFDENEIPQENGNASVISQQIIRSSTFPQTDVLSSSLEAEHRLLKEMGWQEDSENDETCAPITEDEMREFQVISEQLQKNGLRKNGILKNGLICDFKFGPWKNSTFKPTTENDDTETSSSDTSDDDDV.

Disordered regions lie at residues 1–25, 45–169, and 191–342; these read MAQH…SSLN, RRHN…KSRA, and VGNL…QERD. At Ser49 the chain carries Phosphoserine. Residue Arg87 is modified to Omega-N-methylarginine. Positions 93–107 are enriched in low complexity; that stretch reads GSSRSRSSIFHSGKS. Residues 119–133 show a composition bias toward basic and acidic residues; sequence ETGRKEDKRERKQFE. Composition is skewed to polar residues over residues 194-204 and 251-286; these read LPSQPVKNGTG and AFKS…QQPR. Residues Ser274, Ser276, Ser322, and Ser381 each carry the phosphoserine modification. Basic and acidic residues predominate over residues 293-329; that stretch reads MRTDKKSEFLKALKRDRVEEEHEDESRAGSEKDDDSF. A disordered region spans residues 444-473; it reads GPWKNSTFKPTTENDDTETSSSDTSDDDDV. Residues 456-473 show a composition bias toward acidic residues; the sequence is ENDDTETSSSDTSDDDDV.

The protein belongs to the vasculin family. As to quaternary structure, interacts with GTF2B, GTF2F2, RNA polymerase II and TBP.

Its subcellular location is the nucleus. Its function is as follows. Functions as a GC-rich promoter-specific transactivating transcription factor. The sequence is that of Vasculin (GPBP1) from Pongo abelii (Sumatran orangutan).